The chain runs to 67 residues: Conotoxin Cal14.2c (67 aa).

A signal peptide spans 1–20; sequence MNVTVMFLVLLLLTMPLTDG. Residues 21-48 constitute a propeptide that is removed on maturation; it reads FNIRATNGGELFGPVQRDAGNVLDHGFQ.

This sequence belongs to the conotoxin L superfamily. Contains 2 disulfide bonds. In terms of tissue distribution, expressed by the venom duct.

Its subcellular location is the secreted. Functionally, probable neurotoxin with unknown target. Possibly targets ion channels. The protein is Conotoxin Cal14.2c of Californiconus californicus (California cone).